A 185-amino-acid chain; its full sequence is Peptidyl-tRNA hydrolase (185 aa).

Residue Tyr-14 participates in tRNA binding. Residue His-19 is the Proton acceptor of the active site. TRNA is bound by residues Tyr-64, Asn-66, and Asn-112.

It belongs to the PTH family. In terms of assembly, monomer.

It localises to the cytoplasm. The catalysed reaction is an N-acyl-L-alpha-aminoacyl-tRNA + H2O = an N-acyl-L-amino acid + a tRNA + H(+). Its function is as follows. Hydrolyzes ribosome-free peptidyl-tRNAs (with 1 or more amino acids incorporated), which drop off the ribosome during protein synthesis, or as a result of ribosome stalling. Functionally, catalyzes the release of premature peptidyl moieties from peptidyl-tRNA molecules trapped in stalled 50S ribosomal subunits, and thus maintains levels of free tRNAs and 50S ribosomes. In Lactobacillus helveticus (strain DPC 4571), this protein is Peptidyl-tRNA hydrolase.